A 117-amino-acid chain; its full sequence is Cliotide T9 (117 aa).

A signal peptide spans Met-1 to Ala-25. Positions Gly-26–Asn-55 form a cross-link, cyclopeptide (Gly-Asn). Disulfide bonds link Cys-29/Cys-45, Cys-33/Cys-47, and Cys-38/Cys-52. A propeptide spans His-56–Pro-117 (removed in mature form).

Post-translationally, contains 3 disulfide bonds. This is a cyclic peptide. As to expression, expressed in seed but not in root, nodule, flower, stem, shoot, leaf and pod (at protein level).

In terms of biological role, probably participates in a plant defense mechanism. This chain is Cliotide T9, found in Clitoria ternatea (Butterfly pea).